A 187-amino-acid polypeptide reads, in one-letter code: MKKPSLIFLTGFSTSGKSTIGPLLANSLGFEFIDIDKEIVDREQKSINEIFAEKGEPYFRELEYNVLSSISQSEDLVVALGGGTLENDKCFEFIRKAGTLVYLKSDVATLARRLSHKEDRPLMKGENGEKLSIEDISDRVEKLLAKREPRYSAAEILALTDKTPLGVTIENLTRQIERHIRANCKTN.

14–19 (TSGKST) contacts ATP. Ser18 is a binding site for Mg(2+). Substrate-binding residues include Asp36, Arg60, and Gly82. ATP is bound at residue Arg120. Arg147 provides a ligand contact to substrate.

It belongs to the shikimate kinase family. As to quaternary structure, monomer. Mg(2+) is required as a cofactor.

It localises to the cytoplasm. It catalyses the reaction shikimate + ATP = 3-phosphoshikimate + ADP + H(+). It participates in metabolic intermediate biosynthesis; chorismate biosynthesis; chorismate from D-erythrose 4-phosphate and phosphoenolpyruvate: step 5/7. Its function is as follows. Catalyzes the specific phosphorylation of the 3-hydroxyl group of shikimic acid using ATP as a cosubstrate. The protein is Shikimate kinase of Chloroherpeton thalassium (strain ATCC 35110 / GB-78).